The following is a 394-amino-acid chain: Proliferation-associated protein 2G4 (394 aa).

Position 2 is an N-acetylserine (Ser-2). Ser-2 is subject to Phosphoserine. Residues 2-48 (SGEDEQQEQTIAEDLVVTKYKMGGDIANRVLRSLVEASSSGVSVLSL) are necessary for nucleolar localization. An RNA-binding region spans residues 46-54 (LSLCEKGDA). Lys-298 participates in a covalent cross-link: Glycyl lysine isopeptide (Lys-Gly) (interchain with G-Cter in SUMO2). The tract at residues 301-394 (LLQPFNVLYE…ETLEENGAGD (94 aa)) is necessary for nucleolar localization. At Ser-335 the chain carries Phosphoserine. Residues 358 to 394 (LQSSASRKTQKKKKKKASKTVENATSGETLEENGAGD) form a disordered region. At Ser-361 the chain carries Phosphoserine; by PKC/PRKCD. The interval 361–375 (SASRKTQKKKKKKAS) is interaction with RNA. Basic residues predominate over residues 365-375 (KTQKKKKKKAS). Thr-366 and Thr-386 each carry phosphothreonine.

It belongs to the peptidase M24 family. In terms of assembly, isoform 2 interacts with the cytoplasmic domain of non-phosphorylated ERBB3; the interaction requires PKC activity. Interacts with AR. Treatment with HRG leads to dissociation from ERBB3 and increases association with AR. Interacts with nucleolin/NCL. Component of a ribonucleoprotein complex containing at least PA2G4, NCL, TOP1, PABPC2, RPLP0, acetylated histone H1 (HIST1H1A or H1F1), histone H1 2/4, RPL4, RPL8, RPL15, RPL18, RPL18A, RPL21, RPL11, RPL12, RPL28, RPL27, RPLP2 and RPL24. Interacts with HDAC2. Interacts with RB1; the interaction is enhanced upon PA2G4 dephosphorylation. Interacts with AKT1. Isoform 1 and isoform 2 interact with RNF20. Isoform 2 interacts with HUWE1. Interacts with DNAJC21. Phosphorylated on serine and threonine residues. Phosphorylation is enhanced by HRG treatment. Basal phosphorylation is PKC-dependent and HRG-induced phosphorylation is predominantly PKC-independent. Phosphorylation at Ser-361 by PKC/PRKCD regulates its nucleolar localization. Post-translationally, isoform 2 is polyubiquitinated, leading to proteasomal degradation and phosphorylation by PKC/PRKCD enhances polyubiquitination. Widely expressed.

The protein localises to the cytoplasm. Its subcellular location is the nucleus. It is found in the nucleolus. In terms of biological role, may play a role in a ERBB3-regulated signal transduction pathway. Seems be involved in growth regulation. Acts a corepressor of the androgen receptor (AR) and is regulated by the ERBB3 ligand neuregulin-1/heregulin (HRG). Inhibits transcription of some E2F1-regulated promoters, probably by recruiting histone acetylase (HAT) activity. Binds RNA. Associates with 28S, 18S and 5.8S mature rRNAs, several rRNA precursors and probably U3 small nucleolar RNA. May be involved in regulation of intermediate and late steps of rRNA processing. May be involved in ribosome assembly. Mediates cap-independent translation of specific viral IRESs (internal ribosomal entry site). Together with PTBP1 is required for the translation initiation on the foot-and-mouth disease virus (FMDV) IRES. Regulates cell proliferation, differentiation, and survival. Isoform 1 suppresses apoptosis whereas isoform 2 promotes cell differentiation. This chain is Proliferation-associated protein 2G4 (Pa2g4), found in Mus musculus (Mouse).